We begin with the raw amino-acid sequence, 208 residues long: LexA repressor (208 aa).

The segment at residues 28–48 is a DNA-binding region (H-T-H motif); it reads VREIGEAVGLASSSTVHGHLA. Residues S130 and K168 each act as for autocatalytic cleavage activity in the active site.

This sequence belongs to the peptidase S24 family. Homodimer.

It carries out the reaction Hydrolysis of Ala-|-Gly bond in repressor LexA.. Represses a number of genes involved in the response to DNA damage (SOS response), including recA and lexA. In the presence of single-stranded DNA, RecA interacts with LexA causing an autocatalytic cleavage which disrupts the DNA-binding part of LexA, leading to derepression of the SOS regulon and eventually DNA repair. In Shouchella clausii (strain KSM-K16) (Alkalihalobacillus clausii), this protein is LexA repressor.